The following is a 95-amino-acid chain: UPF0298 protein LVIS_1401 (95 aa).

The protein belongs to the UPF0298 family.

It is found in the cytoplasm. The sequence is that of UPF0298 protein LVIS_1401 from Levilactobacillus brevis (strain ATCC 367 / BCRC 12310 / CIP 105137 / JCM 1170 / LMG 11437 / NCIMB 947 / NCTC 947) (Lactobacillus brevis).